Here is a 507-residue protein sequence, read N- to C-terminus: MMAAAPIQQNGTHTGVPIDLDPPDSRKRPLEAPPEAGSTKRTNTGEDGQYFLKVLIPSYAAGSIIGKGGQTIVQLQKETGATIKLSKSKDFYPGTTERVCLIQGTVEALNAVHGFIAEKIREMPQNVAKTEPVSILQPQTTVNPDRIKQTLPSSPTTTKSSPSDPMTTSRANQVKIIVPNSTAGLIIGKGGATVKAVMEQSGAWVQLSQKPDGINLQERVVTVSGEPEQNRKAVELIIQKIQEDPQSGSCLNISYANVTGPVANSNPTGSPYANTAEVLPTAAAAAGLLGHANLAGVAAFPAVLSGFTGNDLVAITSALNTLASYGYNLNTLGLGLSQAAATGALAAAAASANPAAAAANLLATYASEASASGSTAGGTAGTFALGSLAAATAATNGYFGAASPLAASAILGTEKSTDGSKDVVEIAVPENLVGAILGKGGKTLVEYQELTGARIQISKKGEFVPGTRNRKVTITGTPAATQAAQYLITQRITYEQGVRAANPQKVG.

The disordered stretch occupies residues 1 to 44; sequence MMAAAPIQQNGTHTGVPIDLDPPDSRKRPLEAPPEAGSTKRTNT. The Bipartite nuclear localization signal motif lies at 27-43; that stretch reads KRPLEAPPEAGSTKRTN. Residues 49–116 enclose the KH 1 domain; sequence QYFLKVLIPS…EALNAVHGFI (68 aa). Residues 139-171 are disordered; sequence QTTVNPDRIKQTLPSSPTTTKSSPSDPMTTSRA. The span at 150 to 169 shows a compositional bias: low complexity; the sequence is TLPSSPTTTKSSPSDPMTTS. Ser154 bears the Phosphoserine mark. KH domains are found at residues 171-237 and 421-488; these read ANQV…VELI and KDVV…QYLI. Positions 419-503 are required for RNA binding; sequence GSKDVVEIAV…YEQGVRAANP (85 aa).

As to quaternary structure, interacts with PTBP2; the interaction is direct. As to expression, expressed in cerebellum, brain stem, hippocampus, and frontal cortex.

Its subcellular location is the nucleus. Its function is as follows. Functions to regulate alternative splicing in neurons by binding pre-mRNA in a sequence-specific manner to activate exon inclusion or exclusion. It binds specifically to the sequences 5'-YCAY-3' and regulates splicing in only a subset of regulated exons. Binding to an exonic 5'-YCAY-3' cluster changes the protein complexes assembled on pre-mRNA, blocking U1 snRNP binding and exon inclusion, whereas binding to an intronic 5'-YCAY-3' cluster enhances spliceosome assembly and exon inclusion. Binding to 5'-YCAY-3' clusters results in a local and asymmetric action to regulate spliceosome assembly and alternative splicing in neurons. Binding to an exonic 5'-YCAY-3' cluster changed the protein complexes assembled on pre-mRNA, blocking U1 snRNP (small nuclear ribonucleoprotein) binding and exon inclusion, whereas binding to an intronic 5'-YCAY-3' cluster enhanced spliceosome assembly and exon inclusion. With NOVA1, they perform unique biological functions in different brain areas and cell types. Autoregulates its own expression by acting as a splicing repressor. Acts to activate the inclusion of exon E3A in the glycine receptor alpha-2 chain and of exon E9 in gamma-aminobutyric-acid receptor gamma-2 subunit via a distal downstream UCAU-rich intronic splicing enhancer. Acts to regulate a novel glycine receptor alpha-2 chain splice variant (alpha-2N) in developing spinal cord. In Homo sapiens (Human), this protein is RNA-binding protein Nova-1.